Consider the following 540-residue polypeptide: Chaperonin GroEL (540 aa).

ATP contacts are provided by residues 30 to 33 (TLGP), K51, 87 to 91 (DGTTT), G415, and D495.

Belongs to the chaperonin (HSP60) family. As to quaternary structure, forms a cylinder of 14 subunits composed of two heptameric rings stacked back-to-back. Interacts with the co-chaperonin GroES.

The protein localises to the cytoplasm. It carries out the reaction ATP + H2O + a folded polypeptide = ADP + phosphate + an unfolded polypeptide.. In terms of biological role, together with its co-chaperonin GroES, plays an essential role in assisting protein folding. The GroEL-GroES system forms a nano-cage that allows encapsulation of the non-native substrate proteins and provides a physical environment optimized to promote and accelerate protein folding. The protein is Chaperonin GroEL of Serratia marcescens.